Here is a 113-residue protein sequence, read N- to C-terminus: T cell receptor alpha variable 8-6 (113 aa).

The N-terminal stretch at 1–20 (MLLLLVPAFQVIFTLGGTRA) is a signal peptide. The Ig-like domain occupies 21–113 (QSVTQLDSQV…DTAEYFCAVS (93 aa)). Cysteine 42 and cysteine 110 form a disulfide bridge. 2 N-linked (GlcNAc...) asparagine glycosylation sites follow: asparagine 43 and asparagine 87.

In terms of assembly, alpha-beta TR is a heterodimer composed of an alpha and beta chain; disulfide-linked. The alpha-beta TR is associated with the transmembrane signaling CD3 coreceptor proteins to form the TR-CD3 (TcR or TCR). The assembly of alpha-beta TR heterodimers with CD3 occurs in the endoplasmic reticulum where a single alpha-beta TR heterodimer associates with one CD3D-CD3E heterodimer, one CD3G-CD3E heterodimer and one CD247 homodimer forming a stable octameric structure. CD3D-CD3E and CD3G-CD3E heterodimers preferentially associate with TR alpha and TR beta chains, respectively. The association of the CD247 homodimer is the last step of TcR assembly in the endoplasmic reticulum and is required for transport to the cell surface.

The protein localises to the cell membrane. Its function is as follows. V region of the variable domain of T cell receptor (TR) alpha chain that participates in the antigen recognition. Alpha-beta T cell receptors are antigen specific receptors which are essential to the immune response and are present on the cell surface of T lymphocytes. Recognize peptide-major histocompatibility (MH) (pMH) complexes that are displayed by antigen presenting cells (APC), a prerequisite for efficient T cell adaptive immunity against pathogens. Binding of alpha-beta TR to pMH complex initiates TR-CD3 clustering on the cell surface and intracellular activation of LCK that phosphorylates the ITAM motifs of CD3G, CD3D, CD3E and CD247 enabling the recruitment of ZAP70. In turn ZAP70 phosphorylates LAT, which recruits numerous signaling molecules to form the LAT signalosome. The LAT signalosome propagates signal branching to three major signaling pathways, the calcium, the mitogen-activated protein kinase (MAPK) kinase and the nuclear factor NF-kappa-B (NF-kB) pathways, leading to the mobilization of transcription factors that are critical for gene expression and essential for T cell growth and differentiation. The T cell repertoire is generated in the thymus, by V-(D)-J rearrangement. This repertoire is then shaped by intrathymic selection events to generate a peripheral T cell pool of self-MH restricted, non-autoaggressive T cells. Post-thymic interaction of alpha-beta TR with the pMH complexes shapes TR structural and functional avidity. The chain is T cell receptor alpha variable 8-6 from Homo sapiens (Human).